A 117-amino-acid chain; its full sequence is Aspartate 1-decarboxylase (117 aa).

Serine 25 (schiff-base intermediate with substrate; via pyruvic acid) is an active-site residue. Position 25 is a pyruvic acid (Ser) (serine 25). Threonine 57 is a substrate binding site. Tyrosine 58 (proton donor) is an active-site residue. A substrate-binding site is contributed by 73–75 (GAA).

It belongs to the PanD family. In terms of assembly, heterooctamer of four alpha and four beta subunits. It depends on pyruvate as a cofactor. In terms of processing, is synthesized initially as an inactive proenzyme, which is activated by self-cleavage at a specific serine bond to produce a beta-subunit with a hydroxyl group at its C-terminus and an alpha-subunit with a pyruvoyl group at its N-terminus.

It localises to the cytoplasm. It carries out the reaction L-aspartate + H(+) = beta-alanine + CO2. The protein operates within cofactor biosynthesis; (R)-pantothenate biosynthesis; beta-alanine from L-aspartate: step 1/1. In terms of biological role, catalyzes the pyruvoyl-dependent decarboxylation of aspartate to produce beta-alanine. The polypeptide is Aspartate 1-decarboxylase (Bacteroides fragilis (strain ATCC 25285 / DSM 2151 / CCUG 4856 / JCM 11019 / LMG 10263 / NCTC 9343 / Onslow / VPI 2553 / EN-2)).